A 392-amino-acid polypeptide reads, in one-letter code: Small ribosomal subunit protein uS9m (392 aa).

The segment covering 8-25 has biased composition (low complexity); that stretch reads RSSRAMSSASPASASDSD. The segment at 8-27 is disordered; it reads RSSRAMSSASPASASDSDTS.

It belongs to the universal ribosomal protein uS9 family. Component of the mitochondrial ribosome small subunit (28S) which comprises a 12S rRNA and about 30 distinct proteins.

It is found in the mitochondrion. This is Small ribosomal subunit protein uS9m (mrps-9) from Caenorhabditis elegans.